A 449-amino-acid chain; its full sequence is Glutamyl-tRNA reductase (449 aa).

Substrate is bound by residues 49 to 52 (TCNR), serine 107, 112 to 114 (EPQ), and glutamine 118. The Nucleophile role is filled by cysteine 50. NADP(+) is bound at residue 187-192 (GAGETI). The segment at 418-449 (QLVERSSEGDDSQQAGADGGAARGDRRAAGGS) is disordered. A compositionally biased stretch (basic and acidic residues) spans 440–449 (RGDRRAAGGS).

It belongs to the glutamyl-tRNA reductase family. As to quaternary structure, homodimer.

The enzyme catalyses (S)-4-amino-5-oxopentanoate + tRNA(Glu) + NADP(+) = L-glutamyl-tRNA(Glu) + NADPH + H(+). It functions in the pathway porphyrin-containing compound metabolism; protoporphyrin-IX biosynthesis; 5-aminolevulinate from L-glutamyl-tRNA(Glu): step 1/2. In terms of biological role, catalyzes the NADPH-dependent reduction of glutamyl-tRNA(Glu) to glutamate 1-semialdehyde (GSA). The sequence is that of Glutamyl-tRNA reductase from Halorhodospira halophila (strain DSM 244 / SL1) (Ectothiorhodospira halophila (strain DSM 244 / SL1)).